Reading from the N-terminus, the 317-residue chain is Putative 2-hydroxyacid dehydrogenase SAOUHSC_02577 (317 aa).

Residues 155-156, 234-236, and aspartate 260 each bind NAD(+); these read EI and ASR. The active site involves arginine 236. The active site involves glutamate 265. Histidine 283 functions as the Proton donor in the catalytic mechanism. 283 to 286 contributes to the NAD(+) binding site; that stretch reads HIGN.

This sequence belongs to the D-isomer specific 2-hydroxyacid dehydrogenase family.

This chain is Putative 2-hydroxyacid dehydrogenase SAOUHSC_02577, found in Staphylococcus aureus (strain NCTC 8325 / PS 47).